A 585-amino-acid chain; its full sequence is MVVPDSGSDIQPADNGDTDKVMSNSEPELDPNLTTVELEEVRKLQDLVRQLEVQNQTLHNRSRKQVLGGTNNSNLKAGSNINNLHKVMDTSPGAEEAGNLELSPPADSSGSEDMSPLPDTSRVEEQDGFLSLPCSSGSKQTMGWFVTSNCDSGMLGASEASKDQSALDEVDVLDLELCAKAEDEDSWLYVSPKKEVVIEHGPESPLKWCRKVLDHPSPATEVACRTLINRLDQSSRWKNVYSSPSQTSEAGVSASSSAGYLKSTNKTLLTSGSSGYMGVYSALSSQSSVDSELSSDESISMGYKLQDLTDVQIMARLQEESLRQDYASTSASRRSSSASLQSLRRGTYSDQEFDSYSQEDEEDECCSLPQHLQRYSPSPHSSPRCLSPSTLAEYNRLSAPRPRLSRCSLAGGGAKSEEELRHSMPNLTPRTSLRSLEAVRNSRSMEANLQSSGNRTSCLPHSPKGASSSRMRSDGQSPLYLRAPMKALSPVGSMSALRQHAKGPPSAQVGHTEAMRRVQSPGSKNGVGYSGCRTAVVTRQTPGRGMTPASPSSRTRLPQTPRSRSLGMTKPSGHLTDESWKDGCY.

Disordered stretches follow at residues 1 to 34 (MVVPDSGSDIQPADNGDTDKVMSNSEPELDPNLT), 55 to 125 (NQTL…RVEE), 324 to 365 (QDYA…EDEC), 402 to 476 (PRLS…SDGQ), and 492 to 585 (GSMS…DGCY). A compositionally biased stretch (polar residues) spans 68–83 (GGTNNSNLKAGSNINN). Positions 327–345 (ASTSASRRSSSASLQSLRR) are enriched in low complexity. Over residues 351–365 (QEFDSYSQEDEEDEC) the composition is skewed to acidic residues. 3 stretches are compositionally biased toward polar residues: residues 425–434 (PNLTPRTSLR), 441–476 (NSRSMEANLQSSGNRTSCLPHSPKGASSSRMRSDGQ), and 549–563 (ASPSSRTRLPQTPRS). Residues 575-585 (LTDESWKDGCY) are compositionally biased toward basic and acidic residues.

It belongs to the SLAIN motif-containing family.

This chain is SLAIN motif-containing protein-like, found in Danio rerio (Zebrafish).